The primary structure comprises 169 residues: Orotate phosphoribosyltransferase (169 aa).

5-phospho-alpha-D-ribose 1-diphosphate contacts are provided by residues R86, K90, H92, and 111 to 119; that span reads EDVTTSGGS. 2 residues coordinate orotate: T115 and R143.

Belongs to the purine/pyrimidine phosphoribosyltransferase family. PyrE subfamily. Homodimer. It depends on Mg(2+) as a cofactor.

The enzyme catalyses orotidine 5'-phosphate + diphosphate = orotate + 5-phospho-alpha-D-ribose 1-diphosphate. It participates in pyrimidine metabolism; UMP biosynthesis via de novo pathway; UMP from orotate: step 1/2. Catalyzes the transfer of a ribosyl phosphate group from 5-phosphoribose 1-diphosphate to orotate, leading to the formation of orotidine monophosphate (OMP). The polypeptide is Orotate phosphoribosyltransferase (Methanocorpusculum labreanum (strain ATCC 43576 / DSM 4855 / Z)).